The following is a 214-amino-acid chain: Riboflavin kinase (214 aa).

The tract at residues 1–26 (MRPDGPRDPVAGPDSGPEPPYPVRLS) is disordered. Mg(2+) contacts are provided by T44 and N46. The Nucleophile role is filled by E116.

This sequence belongs to the flavokinase family. Zn(2+) is required as a cofactor. Requires Mg(2+) as cofactor.

The enzyme catalyses riboflavin + ATP = FMN + ADP + H(+). It functions in the pathway cofactor biosynthesis; FMN biosynthesis; FMN from riboflavin (ATP route): step 1/1. In terms of biological role, catalyzes the phosphorylation of riboflavin (vitamin B2) to form flavin mononucleotide (FMN) coenzyme. This is Riboflavin kinase (fmn1) from Aspergillus fumigatus (strain ATCC MYA-4609 / CBS 101355 / FGSC A1100 / Af293) (Neosartorya fumigata).